Here is a 617-residue protein sequence, read N- to C-terminus: MPDYRSKTSTHGRNMAGARALWRATGMKTEDFGKPIIAVANSFTQFVPGHVHLKDMGQLVAGVIEEAGGIAKEFNTIAVDDGIAMGHDGMLYSLPSRDLIADSVEYMCNAHCADALVCISNCDKITPGMMMAAMRLNIPTIFVTGGPMESGKTVLGGMEIKLDLVDAMVMAADDHCSDSDINDVEVSACPTCGSCSGMFTANSMNCLAEALGIALPGNGTTLATHADRRHLFEEAGRRIVELAKLYYEKDDEGVLPRSIATVEAFENAMALDVAMGGSTNTVLHLLAIAREAEVNFTMADMDRISRNVPCLVKVAPNSKDYHMEDVHRAGGIMRILGELDRGELLNRDVKTVHASTMAAAIDLWDITRTDDEAVKTFYRAAPGNVRTTEAFSQNKRWKTLDDDDANGCIRSVEHAYTKEGGLAVLYGNIALDGCIVKTAGVDEEIFKFSGPARIYESQDAAVAAILGDEVKSGDVVLIRYEGPKGGPGMQEMLYPTSYLKSKGLGKECALLTDGRFSGGTSGLSIGHCSPEAAEGGNIGLVEEGDLIKIDIPNRTISVDLTDEELAERRQAMVAKGKAAWKPAEPRTRKVSAALRAYAAMTTSAAFGAVRNVEQIEH.

Asp81 serves as a coordination point for Mg(2+). A [2Fe-2S] cluster-binding site is contributed by Cys122. Mg(2+)-binding residues include Asp123 and Lys124. Lys124 is subject to N6-carboxylysine. [2Fe-2S] cluster is bound at residue Cys195. Glu491 lines the Mg(2+) pocket. Ser517 serves as the catalytic Proton acceptor.

The protein belongs to the IlvD/Edd family. In terms of assembly, homodimer. Requires [2Fe-2S] cluster as cofactor. It depends on Mg(2+) as a cofactor.

The enzyme catalyses (2R)-2,3-dihydroxy-3-methylbutanoate = 3-methyl-2-oxobutanoate + H2O. It catalyses the reaction (2R,3R)-2,3-dihydroxy-3-methylpentanoate = (S)-3-methyl-2-oxopentanoate + H2O. It participates in amino-acid biosynthesis; L-isoleucine biosynthesis; L-isoleucine from 2-oxobutanoate: step 3/4. It functions in the pathway amino-acid biosynthesis; L-valine biosynthesis; L-valine from pyruvate: step 3/4. Its function is as follows. Functions in the biosynthesis of branched-chain amino acids. Catalyzes the dehydration of (2R,3R)-2,3-dihydroxy-3-methylpentanoate (2,3-dihydroxy-3-methylvalerate) into 2-oxo-3-methylpentanoate (2-oxo-3-methylvalerate) and of (2R)-2,3-dihydroxy-3-methylbutanoate (2,3-dihydroxyisovalerate) into 2-oxo-3-methylbutanoate (2-oxoisovalerate), the penultimate precursor to L-isoleucine and L-valine, respectively. The polypeptide is Dihydroxy-acid dehydratase (Hydrogenovibrio crunogenus (strain DSM 25203 / XCL-2) (Thiomicrospira crunogena)).